The following is a 156-amino-acid chain: Small ribosomal subunit protein uS7 (156 aa).

The protein belongs to the universal ribosomal protein uS7 family. In terms of assembly, part of the 30S ribosomal subunit. Contacts proteins S9 and S11.

Functionally, one of the primary rRNA binding proteins, it binds directly to 16S rRNA where it nucleates assembly of the head domain of the 30S subunit. Is located at the subunit interface close to the decoding center, probably blocks exit of the E-site tRNA. This is Small ribosomal subunit protein uS7 from Metamycoplasma arthritidis (strain 158L3-1) (Mycoplasma arthritidis).